The primary structure comprises 355 residues: DNA polymerase IV (355 aa).

In terms of domain architecture, UmuC spans isoleucine 4–glycine 185. Residues aspartate 8 and aspartate 103 each contribute to the Mg(2+) site. Glutamate 104 is an active-site residue.

The protein belongs to the DNA polymerase type-Y family. Monomer. The cofactor is Mg(2+).

It is found in the cytoplasm. The catalysed reaction is DNA(n) + a 2'-deoxyribonucleoside 5'-triphosphate = DNA(n+1) + diphosphate. In terms of biological role, poorly processive, error-prone DNA polymerase involved in untargeted mutagenesis. Copies undamaged DNA at stalled replication forks, which arise in vivo from mismatched or misaligned primer ends. These misaligned primers can be extended by PolIV. Exhibits no 3'-5' exonuclease (proofreading) activity. May be involved in translesional synthesis, in conjunction with the beta clamp from PolIII. The chain is DNA polymerase IV from Shewanella amazonensis (strain ATCC BAA-1098 / SB2B).